A 621-amino-acid polypeptide reads, in one-letter code: Interferon-induced GTP-binding protein Mx1 (621 aa).

Positions 31 to 304 constitute a Dynamin-type G domain; it reads DLALPAIAVI…LVHHIEKSLP (274 aa). A G1 motif region spans residues 41–48; sequence GDQSSGKS. 41-48 is a GTP binding site; it reads GDQSSGKS. Residues 66 to 68 form a G2 motif region; the sequence is VTR. A G3 motif region spans residues 142 to 145; the sequence is DLPG. Residues 142-146 and 211-214 contribute to the GTP site; these read DLPGI and TKPD. Positions 211 to 214 are G4 motif; that stretch reads TKPD. Positions 243–246 are G5 motif; that stretch reads KCRG. Positions 535–621 constitute a GED domain; the sequence is LQEMMLHLKS…MKARSYLVEF (87 aa).

It belongs to the TRAFAC class dynamin-like GTPase superfamily. Dynamin/Fzo/YdjA family.

Its subcellular location is the cytoplasm. Functionally, does not inhibit strain RB-1 of the fish pathogen, infectious hematopoietic necrosis virus (IHNV). The polypeptide is Interferon-induced GTP-binding protein Mx1 (mx1) (Oncorhynchus mykiss (Rainbow trout)).